The sequence spans 216 residues: Hexitol phosphatase A (216 aa).

The Nucleophile role is filled by aspartate 9. A divalent metal cation-binding residues include aspartate 9 and aspartate 11. Residues 9 to 11 (DLD), 106 to 107 (TS), and lysine 138 contribute to the substrate site. Catalysis depends on aspartate 11, which acts as the Proton donor. Aspartate 163 lines the a divalent metal cation pocket.

It belongs to the HAD-like hydrolase superfamily. CbbY/CbbZ/Gph/YieH family. Mg(2+) serves as cofactor. Mn(2+) is required as a cofactor. The cofactor is Co(2+).

The enzyme catalyses sugar phosphate + H2O = sugar + phosphate.. It carries out the reaction D-mannitol 1-phosphate + H2O = D-mannitol + phosphate. It catalyses the reaction D-sorbitol 6-phosphate + H2O = D-sorbitol + phosphate. Sugar-phosphate phosphohydrolase that appears to contribute to butanol tolerance. Catalyzes the dephosphorylation of D-mannitol 1-phosphate and D-sorbitol 6-phosphate. Is also able to dephosphorylate other sugar phosphates in vitro including ribose-5-phosphate (Rib5P), 2-deoxyribose-5-phosphate, fructose-1-phosphate (Fru1P), fructose-6-phosphate (Fru6P), and glucose-6-phosphate (Glu6P). Selectively hydrolyzes beta-D-glucose-1-phosphate (bGlu1P) and has no activity with the alpha form. The sequence is that of Hexitol phosphatase A from Escherichia coli (strain K12).